A 683-amino-acid chain; its full sequence is uncharacterized protein (683 aa).

Composition is skewed to polar residues over residues 407-420 (FETS…TYTP) and 512-529 (EGSS…SSEA). Disordered regions lie at residues 407–427 (FETS…KLST), 509–556 (FSRE…SSTV), and 621–648 (HNTS…DHPD). Over residues 531–542 (LPPLLTTTPTPT) the composition is skewed to low complexity. 2 stretches are compositionally biased toward polar residues: residues 543 to 556 (NTEK…SSTV) and 621 to 630 (HNTSMPNPHH). A compositionally biased stretch (basic and acidic residues) spans 633–648 (VKPEDHPHHPEGDHPD). The chain crosses the membrane as a helical span at residues 657-677 (IWLLPIAGTIFALVALVIVNI).

It localises to the host membrane. This is an uncharacterized protein from Alcelaphine herpesvirus 1 (strain C500) (AlHV-1).